The primary structure comprises 22 residues: Mu-conotoxin MIIIA (22 aa).

Gln-1 carries the pyrrolidone carboxylic acid modification. 3 cysteine pairs are disulfide-bonded: Cys-3/Cys-15, Cys-4/Cys-21, and Cys-10/Cys-22. Cys-22 is subject to Cysteine amide.

This sequence belongs to the conotoxin M superfamily. In terms of tissue distribution, expressed by the venom duct.

It is found in the secreted. Functionally, mu-conotoxins block voltage-gated sodium channels (Nav). This synthetic toxin potently blocks rNav1.3/SCN3A. It also moderately blocks rNav1.1/SCN1A, rNav1.2/SCN2A, rNav1.4/SCN4A, mNav1.6/SCN8A, and Nav1.7/SCN9A. sodium channels. This block is very slowly reversible. This is Mu-conotoxin MIIIA from Conus magus (Magical cone).